The chain runs to 359 residues: GDSL esterase/lipase At5g03610 (359 aa).

The signal sequence occupies residues 1–22; that stretch reads MDSLIKLFFCLFIFLCTSLLFG. The active-site Nucleophile is the Ser50. N-linked (GlcNAc...) asparagine glycosylation is found at Asn136, Asn236, and Asn259. Active-site residues include Asp332 and His335.

Belongs to the 'GDSL' lipolytic enzyme family.

The protein localises to the secreted. The protein is GDSL esterase/lipase At5g03610 of Arabidopsis thaliana (Mouse-ear cress).